The chain runs to 398 residues: ATP-dependent RNA helicase RhlB (398 aa).

The short motif at 9-37 (TRFHDFKLSNELMHAIHDLGFPYCTPIQA) is the Q motif element. The region spanning 40–220 (LGYTLRGQDA…KQWTTNPAIV (181 aa)) is the Helicase ATP-binding domain. ATP is bound at residue 53-60 (AQTGTGKT). Residues 166-169 (DEAD) carry the DEAD box motif. In terms of domain architecture, Helicase C-terminal spans 243 to 393 (DKYKLLYNLV…MPPDELLKPV (151 aa)).

This sequence belongs to the DEAD box helicase family. RhlB subfamily. As to quaternary structure, component of the RNA degradosome, which is a multiprotein complex involved in RNA processing and mRNA degradation.

Its subcellular location is the cytoplasm. It catalyses the reaction ATP + H2O = ADP + phosphate + H(+). In terms of biological role, DEAD-box RNA helicase involved in RNA degradation. Has RNA-dependent ATPase activity and unwinds double-stranded RNA. In Pseudomonas putida (strain ATCC 47054 / DSM 6125 / CFBP 8728 / NCIMB 11950 / KT2440), this protein is ATP-dependent RNA helicase RhlB.